The sequence spans 105 residues: Large ribosomal subunit protein uL23 (105 aa).

Belongs to the universal ribosomal protein uL23 family. Part of the 50S ribosomal subunit. Contacts protein L29, and trigger factor when it is bound to the ribosome.

Its function is as follows. One of the early assembly proteins it binds 23S rRNA. One of the proteins that surrounds the polypeptide exit tunnel on the outside of the ribosome. Forms the main docking site for trigger factor binding to the ribosome. The protein is Large ribosomal subunit protein uL23 of Chloroherpeton thalassium (strain ATCC 35110 / GB-78).